A 356-amino-acid polypeptide reads, in one-letter code: UDP-N-acetylglucosamine--N-acetylmuramyl-(pentapeptide) pyrophosphoryl-undecaprenol N-acetylglucosamine transferase (356 aa).

Residues 15-17 (TGG), Asn127, Arg163, Ser191, Ile244, 263-268 (ALTVSE), and Gln288 contribute to the UDP-N-acetyl-alpha-D-glucosamine site.

The protein belongs to the glycosyltransferase 28 family. MurG subfamily.

The protein resides in the cell inner membrane. It catalyses the reaction di-trans,octa-cis-undecaprenyl diphospho-N-acetyl-alpha-D-muramoyl-L-alanyl-D-glutamyl-meso-2,6-diaminopimeloyl-D-alanyl-D-alanine + UDP-N-acetyl-alpha-D-glucosamine = di-trans,octa-cis-undecaprenyl diphospho-[N-acetyl-alpha-D-glucosaminyl-(1-&gt;4)]-N-acetyl-alpha-D-muramoyl-L-alanyl-D-glutamyl-meso-2,6-diaminopimeloyl-D-alanyl-D-alanine + UDP + H(+). Its pathway is cell wall biogenesis; peptidoglycan biosynthesis. In terms of biological role, cell wall formation. Catalyzes the transfer of a GlcNAc subunit on undecaprenyl-pyrophosphoryl-MurNAc-pentapeptide (lipid intermediate I) to form undecaprenyl-pyrophosphoryl-MurNAc-(pentapeptide)GlcNAc (lipid intermediate II). In Klebsiella pneumoniae subsp. pneumoniae (strain ATCC 700721 / MGH 78578), this protein is UDP-N-acetylglucosamine--N-acetylmuramyl-(pentapeptide) pyrophosphoryl-undecaprenol N-acetylglucosamine transferase.